We begin with the raw amino-acid sequence, 1337 residues long: C-Jun-amino-terminal kinase-interacting protein 3 (1337 aa).

Positions 12–100 (VVVYQDDYCS…LTQYEREKAL (89 aa)) constitute an RH1 domain. The segment at 50–80 (EVVKELMPLVVNVLENLDSVLSENQEHEVEL) is kinesin-binding domain (KBD); essential for its function in axon elongation. A coiled-coil region spans residues 58 to 177 (LVVNVLENLD…HTEMIQTYVE (120 aa)). 2 disordered regions span residues 183-211 (KMQQ…SLNV) and 245-285 (SSSY…PSAA). Polar residues predominate over residues 184–198 (MQQVGGSGQTESSLP). Residues 210-226 (NVFPLADGMVRAQMGGK) are JNK-binding domain (JBD); essential for its function in axon elongation. Low complexity predominate over residues 261 to 270 (SSAAATPSTT). Residues Thr266, Thr276, and Thr287 each carry the phosphothreonine; by MAPK modification. The segment covering 271-282 (GTKSNTPTSSVP) has biased composition (polar residues). Residues Ser315 and Ser365 each carry the phosphoserine; by ROCK1 modification. A Phosphoserine modification is found at Ser366. A leucine zipper-like domain (LZ); essential for its function in axon elongation region spans residues 424–459 (LLLENSQLLETKNALNVVKNDLIAKVDQLSGEQEVL). A coiled-coil region spans residues 437–555 (ALNVVKNDLI…LQEAVRWTEM (119 aa)). The interval 459-515 (LKGELEAAKQAKVKLENRIKELEEELKRVKSEAVTARREPREEVEDVSSYLCTELDK) is interaction with NTRK2. The 75-residue stretch at 521–595 (RRRFTRVEMA…SPPPAKRSYP (75 aa)) folds into the RH2 domain. Ser603 is subject to Phosphoserine. The interval 633 to 655 (DDCTSSARREQKREQYRQVREHV) is disordered. Basic and acidic residues predominate over residues 639–655 (ARREQKREQYRQVREHV). Ser677 is modified (phosphoserine). Disordered stretches follow at residues 719 to 772 (WKPH…ATSS) and 859 to 966 (PRSN…TTTS). The segment covering 739 to 765 (LTCDREGEGEPKSTHPSPEKKKAKETP) has biased composition (basic and acidic residues). 2 stretches are compositionally biased toward polar residues: residues 879 to 892 (VATT…PSQS) and 941 to 952 (ENGSESNGTIVQ).

This sequence belongs to the JIP scaffold family. As to quaternary structure, forms homo- or heterooligomeric complexes. The central region of MAPK8IP3 interacts with the C-terminal of MAPK8IP2 but not MAPK8IP1. Binds specific components of the JNK signaling pathway namely MAPK8/JNK1, MAPK9/JNK2 and MAPK10/JNK3 to the N-terminal region, MAP2K4/MKK4 and MAP2K7/MKK7 to the central region and MAP3K11 to the C-terminal region. Binds the TPR motif-containing C-terminal of kinesin light chain, KLC1. Pre-assembled MAPK8IP1 scaffolding complexes are then transported as a cargo of kinesin, to the required subcellular location. Interacts with ROCK1 and this interaction is enhanced by ultraviolet-B (UVB) radiation. Interacts with SH3RF2. Interacts with NTRK2/TRKB and NTRK3/TRKC. In terms of processing, phosphorylation by ROCK1 is crucial for the recruitment of JNK. As to expression, highly expressed throughout many regions of the brain and at lower levels in the heart, liver, lung, testes and kidney. All isoforms have been identified in the brain, isoform 1a is also expressed in the spleen and lung.

The protein resides in the cytoplasm. Its subcellular location is the golgi apparatus. The protein localises to the cytoplasmic vesicle. It is found in the cell projection. It localises to the growth cone. The protein resides in the axon. Its subcellular location is the dendrite. The protein localises to the perinuclear region. In terms of biological role, the JNK-interacting protein (JIP) group of scaffold proteins selectively mediates JNK signaling by aggregating specific components of the MAPK cascade to form a functional JNK signaling module. May function as a regulator of vesicle transport, through interactions with the JNK-signaling components and motor proteins. Promotes neuronal axon elongation in a kinesin- and JNK-dependent manner. Activates cofilin at axon tips via local activation of JNK, thereby regulating filopodial dynamics and enhancing axon elongation. Its binding to kinesin heavy chains (KHC), promotes kinesin-1 motility along microtubules and is essential for axon elongation and regeneration. Regulates cortical neuronal migration by mediating NTRK2/TRKB anterograde axonal transport during brain development. Acts as an adapter that bridges the interaction between NTRK2/TRKB and KLC1 and drives NTRK2/TRKB axonal but not dendritic anterograde transport, which is essential for subsequent BDNF-triggered signaling and filopodia formation. The protein is C-Jun-amino-terminal kinase-interacting protein 3 (Mapk8ip3) of Mus musculus (Mouse).